The following is a 640-amino-acid chain: Chaperone protein DnaK (640 aa).

Thr-201 is subject to Phosphothreonine; by autocatalysis. Positions 603–621 (AASADQGGAPGADAGNAGK) are enriched in low complexity. The segment at 603 to 625 (AASADQGGAPGADAGNAGKAQDD) is disordered.

It belongs to the heat shock protein 70 family.

In terms of biological role, acts as a chaperone. The polypeptide is Chaperone protein DnaK (Stenotrophomonas maltophilia (strain K279a)).